The primary structure comprises 121 residues: Putative iron-sulfur cluster insertion protein ErpA (121 aa).

Residues Cys49, Cys113, and Cys115 each contribute to the iron-sulfur cluster site.

Belongs to the HesB/IscA family. Homodimer. Iron-sulfur cluster is required as a cofactor.

Required for insertion of 4Fe-4S clusters. The polypeptide is Putative iron-sulfur cluster insertion protein ErpA (Paraburkholderia phymatum (strain DSM 17167 / CIP 108236 / LMG 21445 / STM815) (Burkholderia phymatum)).